We begin with the raw amino-acid sequence, 392 residues long: Putative glutamate--cysteine ligase 2 (392 aa).

Positions 347–367 (AARKHGAAPEPGTRTRGDDGV) are disordered.

This sequence belongs to the glutamate--cysteine ligase type 2 family. YbdK subfamily.

The catalysed reaction is L-cysteine + L-glutamate + ATP = gamma-L-glutamyl-L-cysteine + ADP + phosphate + H(+). Its function is as follows. ATP-dependent carboxylate-amine ligase which exhibits weak glutamate--cysteine ligase activity. The polypeptide is Putative glutamate--cysteine ligase 2 (Corynebacterium jeikeium (strain K411)).